Consider the following 547-residue polypeptide: Elongator complex protein 3 (547 aa).

One can recognise a Radical SAM core domain in the interval 82–372; that stretch reads RTASGIAVVA…YRVQRDIPMP (291 aa). 3 residues coordinate [4Fe-4S] cluster: C99, C109, and C112. S161 bears the Phosphoserine mark. K164 contributes to the acetyl-CoA binding site. At Y202 the chain carries Phosphotyrosine; by ALK. K229 is subject to N6-methyllysine. Y251 carries the phosphotyrosine modification. Residues 396–547 form the N-acetyltransferase domain; it reads IQCRDVRTRE…QGPYMVKMLK (152 aa). Acetyl-CoA contacts are provided by residues 474-477, 497-499, and Y530; these read ELHV and FGM.

Belongs to the ELP3 family. As to quaternary structure, component of the elongator complex which consists of ELP1, ELP2, ELP3, ELP4, ELP5 and ELP6. ELP1, ELP2 and ELP3 form the elongator core complex. Interacts with alpha-tubulin. [4Fe-4S] cluster serves as cofactor. Post-translationally, tyrosine-phosphorylated; phosphorylation on Tyr-202 does not affect elongator complex integrity or ELP3 protein stability. Also serine/threonine-phosphorylated. Expressed in the cerebellum and spinal motor neurons.

Its subcellular location is the cytoplasm. It localises to the nucleus. It catalyses the reaction uridine(34) in tRNA + acetyl-CoA + S-adenosyl-L-methionine + H2O = 5-(carboxymethyl)uridine(34) in tRNA + 5'-deoxyadenosine + L-methionine + CoA + 2 H(+). It participates in tRNA modification; 5-methoxycarbonylmethyl-2-thiouridine-tRNA biosynthesis. Functionally, catalytic tRNA acetyltransferase subunit of the elongator complex which is required for multiple tRNA modifications, including mcm5U (5-methoxycarbonylmethyl uridine), mcm5s2U (5-methoxycarbonylmethyl-2-thiouridine), and ncm5U (5-carbamoylmethyl uridine). In the elongator complex, acts as a tRNA uridine(34) acetyltransferase by mediating formation of carboxymethyluridine in the wobble base at position 34 in tRNAs. May also act as a protein lysine acetyltransferase by mediating acetylation of target proteins; such activity is however unclear in vivo and recent evidences suggest that ELP3 primarily acts as a tRNA acetyltransferase. Involved in neurogenesis: regulates the migration and branching of projection neurons in the developing cerebral cortex, through a process depending on alpha-tubulin acetylation. Required for acetylation of GJA1 in the developing cerebral cortex. The protein is Elongator complex protein 3 of Homo sapiens (Human).